The sequence spans 574 residues: Sulfate adenylyltransferase (574 aa).

The tract at residues 1–169 is N-terminal; the sequence is MANSPHGGVL…IEAVNKLNHY (169 aa). Residues 170 to 394 form a catalytic region; it reads DYVALRYSPA…LRESSPPRAT (225 aa). Glutamine 197 serves as a coordination point for sulfate. Residues 197–200 and 291–294 each bind ATP; these read QTRN and GRDH. Residues threonine 198, arginine 199, and asparagine 200 contribute to the active site. Arginine 199 contacts sulfate. Alanine 295 lines the sulfate pocket. Valine 333 contributes to the ATP binding site. An allosteric regulation domain; adenylyl-sulfate kinase-like region spans residues 395–574; it reads QGFTIFLTGY…LESEGYFDRL (180 aa). 3'-phosphoadenylyl sulfate-binding positions include 434–437, arginine 451, 477–478, and arginine 516; these read DTVR and IA.

It in the N-terminal section; belongs to the sulfate adenylyltransferase family. The protein in the C-terminal section; belongs to the APS kinase family. In terms of assembly, homohexamer. Dimer of trimers.

The protein resides in the cytoplasm. The catalysed reaction is sulfate + ATP + H(+) = adenosine 5'-phosphosulfate + diphosphate. It participates in sulfur metabolism; hydrogen sulfide biosynthesis; sulfite from sulfate: step 1/3. Allosterically inhibited by 3'-phosphoadenosine 5'-phosphosulfate (PAPS). Its function is as follows. Catalyzes the first intracellular reaction of sulfate assimilation, forming adenosine-5'-phosphosulfate (APS) from inorganic sulfate and ATP. Plays an important role in sulfate activation as a component of the biosynthesis pathway of sulfur-containing amino acids. The polypeptide is Sulfate adenylyltransferase (Aspergillus terreus (strain NIH 2624 / FGSC A1156)).